The sequence spans 321 residues: Peroxidase 42 (321 aa).

A signal peptide spans 1 to 29; sequence MATSSGSCLIISLLVVVVAAALSASTASA. Gln-30 is subject to Pyrrolidone carboxylic acid. 4 disulfide bridges follow: Cys-40–Cys-118, Cys-73–Cys-78, Cys-124–Cys-315, and Cys-202–Cys-227. The active-site Proton acceptor is His-71. Ca(2+)-binding residues include Asp-72, Ile-75, Gly-77, Asp-79, and Ser-81. Asn-85 and Asn-96 each carry an N-linked (GlcNAc...) asparagine glycan. Pro-165 is a binding site for substrate. His-195 contacts heme b. Thr-196 contributes to the Ca(2+) binding site. A glycan (N-linked (GlcNAc...) asparagine) is linked at Asn-211. Residues Asp-239, Thr-242, and Gly-247 each coordinate Ca(2+). N-linked (GlcNAc...) asparagine glycosylation is present at Asn-270.

It belongs to the peroxidase family. Classical plant (class III) peroxidase subfamily. Heme b serves as cofactor. The cofactor is Ca(2+).

Its subcellular location is the secreted. It carries out the reaction 2 a phenolic donor + H2O2 = 2 a phenolic radical donor + 2 H2O. In terms of biological role, removal of H(2)O(2), oxidation of toxic reductants, biosynthesis and degradation of lignin, suberization, auxin catabolism, response to environmental stresses such as wounding, pathogen attack and oxidative stress. These functions might be dependent on each isozyme/isoform in each plant tissue. In Zea mays (Maize), this protein is Peroxidase 42 (PER42).